Here is a 215-residue protein sequence, read N- to C-terminus: MLQVYLVRHGETQWNAERRIQGQSDSPLTEKGERQAMQVAQRAKALGITHIITSDLGRTQRTAEIIAQGCGCDVILDPRLRELDMGILERRHLDTLSEEEEGWRRQLVNGTPDGRIPQGESMQEVSERMHGALNACLDLPPGSRPLLVSHGMALGCLVSTILGLPAYAERRLRLRNCSISRVDYQQSPWLASGWVVETAGDVSHLDAPALDELQR.

Substrate is bound by residues 8–15 (RHGETQWN), 21–22 (QG), Arg-58, 82–85 (ELDM), 104–105 (RR), and 151–152 (GM). The active-site Tele-phosphohistidine intermediate is the His-9. The active-site Proton donor/acceptor is Glu-82.

This sequence belongs to the phosphoglycerate mutase family. GpmB subfamily.

It catalyses the reaction (2R)-2-phosphoglycerate = (2R)-3-phosphoglycerate. Its pathway is carbohydrate degradation; glycolysis; pyruvate from D-glyceraldehyde 3-phosphate: step 3/5. In Cronobacter sakazakii (strain ATCC BAA-894) (Enterobacter sakazakii), this protein is Probable phosphoglycerate mutase GpmB.